Reading from the N-terminus, the 99-residue chain is Nucleoid-associated protein SAG1747 (99 aa).

Positions 1–10 (MMNMQNMMRQ) are enriched in low complexity. The tract at residues 1 to 20 (MMNMQNMMRQAQKLQKQMEQ) is disordered.

It belongs to the YbaB/EbfC family. As to quaternary structure, homodimer.

It is found in the cytoplasm. Its subcellular location is the nucleoid. Its function is as follows. Binds to DNA and alters its conformation. May be involved in regulation of gene expression, nucleoid organization and DNA protection. The chain is Nucleoid-associated protein SAG1747 from Streptococcus agalactiae serotype V (strain ATCC BAA-611 / 2603 V/R).